The primary structure comprises 427 residues: Peptidase B (427 aa).

Mn(2+)-binding residues include Lys195 and Asp200. Lys207 is an active-site residue. Positions 218, 277, and 279 each coordinate Mn(2+). Arg281 is an active-site residue.

Belongs to the peptidase M17 family. As to quaternary structure, homohexamer. Mn(2+) is required as a cofactor.

The protein resides in the cytoplasm. It carries out the reaction Release of an N-terminal amino acid, Xaa, from a peptide or arylamide. Xaa is preferably Glu or Asp but may be other amino acids, including Leu, Met, His, Cys and Gln.. In terms of biological role, probably plays an important role in intracellular peptide degradation. The polypeptide is Peptidase B (Escherichia coli O127:H6 (strain E2348/69 / EPEC)).